The chain runs to 751 residues: Autophagy-related protein 9 (751 aa).

The Cytoplasmic segment spans residues 1 to 21; that stretch reads MRKLCGNGSTSMISTDSYKNT. Residues 22–42 form a helical membrane-spanning segment; sequence TFFVIAFSTFLISCIDYTKLF. Residues 43-71 lie on the Lumenal side of the membrane; that stretch reads SSLSTPEAVGRLEDVLIGQCITKGSFAHT. A helical membrane pass occupies residues 72-92; the sequence is LFLIILSAFFIFQVANFAMSV. The Cytoplasmic segment spans residues 93–276; it reads PRLLDMYRFY…KDLVQGLRRR (184 aa). Residues 277–297 lie within the membrane without spanning it; sequence FVFMGILNAIFAPFIILYLLI. The Cytoplasmic portion of the chain corresponds to 298 to 365; that stretch reads YSFFRYFEEY…PKERTALVMR (68 aa). Residues 366–386 form a helical membrane-spanning segment; the sequence is FVAFVAGSFAAVLLVASLIDP. The Lumenal segment spans residues 387–398; that stretch reads DLFLHFEITPHR. The chain crosses the membrane as a helical span at residues 399–419; that stretch reads TVLFYLGVFGSVLAISRGMVP. Residues 420–465 lie on the Cytoplasmic side of the membrane; sequence QENMVFDPEASLNEVVRWTHYLPVEWRGQLHSQMVHQEFSKLFALK. An intramembrane segment occupies 466–486; that stretch reads IMIFFSELLSVILTPFILFFS. The Cytoplasmic portion of the chain corresponds to 487-751; the sequence is LPPCAAAIID…DDGVQIDIKQ (265 aa). Disordered stretches follow at residues 528–584 and 676–751; these read NRPE…DWRS and AKSS…DIKQ. Positions 544 to 557 are enriched in gly residues; that stretch reads DSGGGGGGGGGGFA. Over residues 563 to 576 the composition is skewed to polar residues; the sequence is RQTTRRAASASPSR. Basic and acidic residues-rich tracts occupy residues 708-727 and 735-751; these read EGDK…KTDG and EHGR…DIKQ.

Belongs to the ATG9 family. In terms of assembly, homotrimer; forms a homotrimer with a central pore that forms a path between the two membrane leaflets. In terms of processing, phosphorylated by ATG1. ATG1 phosphorylation is required for preautophagosome elongation.

It is found in the preautophagosomal structure membrane. Its subcellular location is the cytoplasmic vesicle membrane. The protein resides in the golgi apparatus membrane. The protein localises to the endoplasmic reticulum membrane. The enzyme catalyses a 1,2-diacyl-sn-glycero-3-phosphocholine(in) = a 1,2-diacyl-sn-glycero-3-phosphocholine(out). It catalyses the reaction a 1,2-diacyl-sn-glycero-3-phospho-L-serine(in) = a 1,2-diacyl-sn-glycero-3-phospho-L-serine(out). The catalysed reaction is a 1,2-diacyl-sn-glycero-3-phosphoethanolamine(in) = a 1,2-diacyl-sn-glycero-3-phosphoethanolamine(out). It carries out the reaction a 1,2-diacyl-sn-glycero-3-phospho-(1D-myo-inositol-3-phosphate)(in) = a 1,2-diacyl-sn-glycero-3-phospho-(1D-myo-inositol-3-phosphate)(out). Phospholipid scramblase involved in autophagy and cytoplasm to vacuole transport (Cvt) vesicle formation. Cycles between the preautophagosomal structure/phagophore assembly site (PAS) and the cytoplasmic vesicle pool and supplies membrane for the growing autophagosome. Lipid scramblase activity plays a key role in preautophagosomal structure/phagophore assembly by distributing the phospholipids that arrive through ATG2 from the cytoplasmic to the luminal leaflet of the bilayer, thereby driving autophagosomal membrane expansion. Required for mitophagy. Also involved in endoplasmic reticulum-specific autophagic process and is essential for the survival of cells subjected to severe ER stress. Different machineries are required for anterograde trafficking to the PAS during either the Cvt pathway or bulk autophagy and for retrograde trafficking. The protein is Autophagy-related protein 9 (ATG9) of Cryptococcus gattii (Filobasidiella gattii).